Reading from the N-terminus, the 989-residue chain is Serine-repeat antigen protein 5 (989 aa).

A signal peptide spans 1-16; it reads MKSYISLFFILCVIFN. 2 disordered regions span residues 26 to 91 and 165 to 245; these read SQTG…EKQD and LPSN…RNLQ. Low complexity-rich tracts occupy residues 52–87, 167–180, and 191–225; these read QGST…STSS, SNGT…STGT, and SSSS…SSSS. Serine 167 carries the post-translational modification Phosphoserine. N-linked (GlcNAc...) asparagine glycosylation is present at asparagine 168. The tract at residues 208–245 is interaction with PTKL; that stretch reads SSSSSSSSSSSSSSSSSSESLPANGPDSPTVKPPRNLQ. Asparagine 310 carries an N-linked (GlcNAc...) asparagine glycan. The segment at 365-382 is interaction with host VTN; sequence YKYLSEDIVSNFKEIKAE. A disulfide bridge links cysteine 437 with cysteine 489. A Phosphothreonine modification is found at threonine 541. 5 disulfide bridges follow: cysteine 559–cysteine 564, cysteine 573–cysteine 602, cysteine 585–cysteine 628, cysteine 619–cysteine 664, and cysteine 747–cysteine 801. The interval 571 to 989 is thiol-protease-like; that stretch reads NNCISNLQVE…TNNECYFCYV (419 aa). Active-site residues include histidine 754 and asparagine 779. N-linked (GlcNAc...) asparagine glycosylation is present at asparagine 820. Positions 835-878 are cleaved as a propeptide — inhibition peptide; the sequence is KASPEFYHNLYFKNFNVGKKNLFSEKEDNENNKKLGNNYIIFGQ. Serine 858 is subject to Phosphoserine.

This sequence belongs to the peptidase C1 family. In terms of assembly, may interact (via C-terminus) with PTKL (via SAM domain). Interacts (via C-terminus) with human VTN (via hemopexin repeat 2); may form heterotetramers of two VTN and SERA5 P47 heterodimers; the interaction may protect merozoites from phagocytosis by host monocytes; VTN glycosylation appears to be dispensable for the interaction. As to quaternary structure, monomer. Interacts with kinase CPK1/CDPK1 at the schizont stage. Post-translationally, phosphorylation by CPK1/CDPK1 increases SERA5 protease activity towards a synthetic peptide in vitro. In terms of processing, just prior to merozoite egress from host erythrocytes, proteolytically cleaved into multiple fragments. Cleaved by SUB1 into p47 and p73, p73 is further cleaved by SUB1 into p56 and p18 and p56 is further processed into p50 by an unidentified protease. p47 remains covalently associated with p18 via disulfide bond. p47 can be processed into p25n and p25c by SUB1. p25c and p25n remain associated with p18. Proteolytic processing is essential for merozoite egress from host erythrocytes. The cleavage of the propeptide to produce p50 is necessary for protease activity and to promote merozoite egress.

It is found in the parasitophorous vacuole. Its subcellular location is the secreted. It localises to the cell membrane. Functionally, plays an essential role during the asexual blood stage development by controlling the kinetics of merozoite egress from host erythrocytes. Specifically, prevents premature rupture of the parasitophorous vacuole and host erythrocyte membranes. May prevent merozoite phagocytosis by host monocytes via interaction with host VTN at the merozoite surface. Plays a role in parasite growth. Its function is as follows. Protease activity is controversial. This Plasmodium falciparum (isolate CDC / Honduras) protein is Serine-repeat antigen protein 5.